The primary structure comprises 317 residues: Ribosomal protein L11 methyltransferase (317 aa).

S-adenosyl-L-methionine-binding residues include threonine 158, glycine 179, aspartate 201, and asparagine 244.

It belongs to the methyltransferase superfamily. PrmA family.

It is found in the cytoplasm. It catalyses the reaction L-lysyl-[protein] + 3 S-adenosyl-L-methionine = N(6),N(6),N(6)-trimethyl-L-lysyl-[protein] + 3 S-adenosyl-L-homocysteine + 3 H(+). Methylates ribosomal protein L11. This is Ribosomal protein L11 methyltransferase from Lactococcus lactis subsp. lactis (strain IL1403) (Streptococcus lactis).